The sequence spans 217 residues: Small ribosomal subunit protein uS3 (217 aa).

Residues 38–106 (IRKFVQKELA…QVHINIIEIK (69 aa)) form the KH type-2 domain.

Belongs to the universal ribosomal protein uS3 family. In terms of assembly, part of the 30S ribosomal subunit. Forms a tight complex with proteins S10 and S14.

Binds the lower part of the 30S subunit head. Binds mRNA in the 70S ribosome, positioning it for translation. The sequence is that of Small ribosomal subunit protein uS3 from Streptococcus pneumoniae serotype 19F (strain G54).